The sequence spans 334 residues: Fructose-1,6-bisphosphatase class 1 (334 aa).

Residues glutamate 89, aspartate 112, leucine 114, and aspartate 115 each contribute to the Mg(2+) site. Substrate is bound by residues aspartate 115–serine 118, asparagine 208, tyrosine 241, and lysine 271. A Mg(2+)-binding site is contributed by glutamate 277.

The protein belongs to the FBPase class 1 family. Homotetramer. It depends on Mg(2+) as a cofactor.

It is found in the cytoplasm. The enzyme catalyses beta-D-fructose 1,6-bisphosphate + H2O = beta-D-fructose 6-phosphate + phosphate. It functions in the pathway carbohydrate biosynthesis; gluconeogenesis. In Serratia proteamaculans (strain 568), this protein is Fructose-1,6-bisphosphatase class 1.